Consider the following 382-residue polypeptide: G2/mitotic-specific cyclin-B2 (382 aa).

Residues 1–12 (MSSVEAVTQQQL) are compositionally biased toward polar residues. The interval 1-78 (MSSVEAVTQQ…HTSAGDPAPI (78 aa)) is disordered. Residues 38-47 (NRNAAAAANR) show a composition bias toward low complexity.

Belongs to the cyclin family. Cyclin AB subfamily. Interacts with the CDK1 protein kinase to form a serine/threonine kinase holoenzyme complex also known as maturation promoting factor (MPF). The cyclin subunit imparts substrate specificity to the complex.

In terms of biological role, essential for the control of the cell cycle at the G2/M (mitosis) transition. The sequence is that of G2/mitotic-specific cyclin-B2 (ccnb2) from Oryzias javanicus (Javanese ricefish).